The primary structure comprises 365 residues: Phosphate acyltransferase (365 aa).

This sequence belongs to the PlsX family. As to quaternary structure, homodimer. Probably interacts with PlsY.

It is found in the cytoplasm. It carries out the reaction a fatty acyl-[ACP] + phosphate = an acyl phosphate + holo-[ACP]. Its pathway is lipid metabolism; phospholipid metabolism. Functionally, catalyzes the reversible formation of acyl-phosphate (acyl-PO(4)) from acyl-[acyl-carrier-protein] (acyl-ACP). This enzyme utilizes acyl-ACP as fatty acyl donor, but not acyl-CoA. This is Phosphate acyltransferase from Klebsiella pneumoniae subsp. pneumoniae (strain ATCC 700721 / MGH 78578).